Reading from the N-terminus, the 889-residue chain is Oxysterol-binding protein-related protein 8 (889 aa).

The residue at position 1 (M1) is an N-acetylmethionine. Residues 1 to 129 form a disordered region; that stretch reads MEGGLADGEP…SLKVQKKNYR (129 aa). S14 bears the Phosphoserine mark. 2 stretches are compositionally biased toward polar residues: residues 28-46 and 62-71; these read VVANSDESQLLTPGKMSQR and PSLSPASPHS. A phosphoserine mark is found at S65 and S68. 3 stretches are compositionally biased toward basic and acidic residues: residues 73–88, 95–109, and 116–129; these read GFERGKEDISQNKDES, SKSESKLYNGSEKDS, and TKKESLKVQKKNYR. In terms of domain architecture, PH spans 148-265; sequence VIVMADWLKI…WMDALELALK (118 aa). Phosphoserine occurs at positions 314, 328, and 342. Residues 322–336 are compositionally biased toward basic and acidic residues; sequence KDQDMYSDKSDKEND. The disordered stretch occupies residues 322–399; the sequence is KDQDMYSDKS…AGEASQTETV (78 aa). Residues 346-363 are compositionally biased toward basic and acidic residues; the sequence is VMGKSEESDTDTSERQDD. A 1,2-diacyl-sn-glycero-3-phospho-(1D-myo-inositol 4-phosphate) contacts are provided by residues 420-425, 482-485, and 514-515; these read LSKVVL, KPYN, and HH. A 1,2-diacyl-sn-glycero-3-phospho-L-serine is bound by residues 420 to 425 and N485; that span reads LSKVVL. An a 1,2-diacyl-sn-glycero-3-phospho-L-serine-binding site is contributed by S540. Residues K706, E710, and R714 each contribute to the a 1,2-diacyl-sn-glycero-3-phospho-(1D-myo-inositol 4-phosphate) site. Residues 771–823 form a disordered region; it reads KHRTPMVSVPKMKHKPTRQQKKVAKGYSSPEPDIQDSSGSEAQSVKPSTRRKK. Basic residues predominate over residues 781–794; it reads KMKHKPTRQQKKVA. Residues 805–817 are compositionally biased toward polar residues; the sequence is QDSSGSEAQSVKP. A phosphoserine mark is found at S807, S808, S810, and S814. A helical membrane pass occupies residues 871–888; that stretch reads YFIIFLLILLQVIINFMF.

Belongs to the OSBP family. Interacts with SPAG5. Interacts with NUP62. Widely expressed. Expressed at higher level in macrophages.

It localises to the endoplasmic reticulum membrane. The protein resides in the nucleus membrane. Functionally, lipid transporter involved in lipid countertransport between the endoplasmic reticulum and the plasma membrane: specifically exchanges phosphatidylserine with phosphatidylinositol 4-phosphate (PI4P), delivering phosphatidylserine to the plasma membrane in exchange for PI4P, which is degraded by the SAC1/SACM1L phosphatase in the endoplasmic reticulum. Binds phosphatidylserine and PI4P in a mutually exclusive manner. Binds oxysterol, 25-hydroxycholesterol and cholesterol. This Homo sapiens (Human) protein is Oxysterol-binding protein-related protein 8 (OSBPL8).